Reading from the N-terminus, the 356-residue chain is GDP-mannose:di-myo-inositol-1,3'-phosphate beta-1,2-mannosyltransferase (356 aa).

The protein belongs to the MDIP synthase family. Mg(2+) is required as a cofactor.

It carries out the reaction bis(myo-inositol) 1,3'-phosphate + GDP-alpha-D-mannose = 2-O-(beta-D-mannosyl)-bis(myo-inositol) 1,3'-phosphate + GDP + H(+). The enzyme catalyses 2-O-(beta-D-mannosyl)-bis(myo-inositol) 1,3'-phosphate + GDP-alpha-D-mannose = 2-O-(beta-D-mannosyl-(1-&gt;2)-beta-D-mannosyl)-bis(myo-inositol) 1,3'-phosphate + GDP + H(+). It catalyses the reaction bis(myo-inositol) 1,3'-phosphate + 2 GDP-alpha-D-mannose = 2-O-(beta-D-mannosyl-(1-&gt;2)-beta-D-mannosyl)-bis(myo-inositol) 1,3'-phosphate + 2 GDP + 2 H(+). Its function is as follows. Catalyzes the transfer of the mannosyl group from GDP-mannose to di-myo-inositol-1,3'-phosphate (DIP), producing mannosyl-di-myo-inositol phosphate (MDIP). Can also use MDIP as an acceptor of a second mannose residue, yielding di-mannosyl-di-myo-inositol phosphate (MMDIP). Minor amounts of the tri-mannosylated form are also formed. In Thermotoga maritima (strain ATCC 43589 / DSM 3109 / JCM 10099 / NBRC 100826 / MSB8), this protein is GDP-mannose:di-myo-inositol-1,3'-phosphate beta-1,2-mannosyltransferase.